Consider the following 213-residue polypeptide: Dimethylamine corrinoid protein 3 (213 aa).

Positions 1–91 (MADIEGLLHE…DLPAGAEKKL (91 aa)) constitute a B12-binding N-terminal domain. The B12-binding domain maps to 92-213 (GVIVNGTVEG…AVAKAKELLL (122 aa)). Residue His104 coordinates methylcob(III)alamin.

The protein belongs to the methylamine corrinoid protein family.

It participates in one-carbon metabolism; methanogenesis from dimethylamine. In terms of biological role, acts as a methyl group carrier between MtbB and MtbA. This is Dimethylamine corrinoid protein 3 (mtbC3) from Methanosarcina acetivorans (strain ATCC 35395 / DSM 2834 / JCM 12185 / C2A).